A 1009-amino-acid polypeptide reads, in one-letter code: MICAL-like protein 2 (1009 aa).

Positions 1–107 (MAAIKALQEW…YVSQYYNYFH (107 aa)) constitute a Calponin-homology (CH) domain. The interval 1–260 (MAAIKALQEW…KSSNLASRKP (260 aa)) is forms an intramolecular interaction with the C-terminal coiled coil domain keeping the protein in a closed conformation. A phosphoserine mark is found at Ser110, Ser143, and Ser153. 4 disordered regions span residues 114–180 (GMAG…PGTA), 247–268 (SVSPKSSNLASRKPGGVTADTR), 348–447 (NSSP…TSKV), and 655–834 (SPSI…TSPV). Residues 144 to 171 (PAQTQRSPLSPARTNPVVQRNEGGSQRP) show a composition bias toward polar residues. The region spanning 186–248 (SICGVCGKHV…THHSSEVTSV (63 aa)) is the LIM zinc-binding domain. Ser249 carries the phosphoserine modification. Residues 261-393 (GGVTADTRPF…QGQTASKGVK (133 aa)) are necessary and sufficient for interaction with actinins. The mediates targeting to the cell plasma membrane stretch occupies residues 261-805 (GGVTADTRPF…EDGTRSCKEE (545 aa)). Polar residues predominate over residues 348–419 (NSSPIGWSSP…AWTSSASKTQ (72 aa)). A compositionally biased stretch (pro residues) spans 430 to 442 (PSAPAPASAPAPA). Basic and acidic residues predominate over residues 694-730 (EGWRARLKPVDKKTPAGRSLEQKEPVLAEPRIGDTSR). Composition is skewed to low complexity over residues 731–746 (KASSSSDSSVHITLTS) and 755–769 (PAGSGPSPAALSPSP). Ser766 and Ser768 each carry phosphoserine. Basic and acidic residues predominate over residues 791–817 (EPKKQEDGTRSCKEEKSPTRWSRERSA). A forms an intramolecular interaction with the N-terminal Calponin-homology and LIM zinc-binding domains-containing region keeping the protein in a closed conformation region spans residues 806 to 913 (KSPTRWSRER…LMYKSKDQRL (108 aa)). Ser832 is subject to Phosphoserine. The bMERB domain occupies 833-980 (PVRLHPDYIP…EQEEDQMLEN (148 aa)). The stretch at 841-880 (IPQEELQRQLQDIESQLDALELRGVELEKRLRAAEGDASE) forms a coiled coil. The segment at 913–1009 (LEEQQLDLQG…WSSKSKSGQA (97 aa)) is mediates interaction with RAB13 and is required for transition from the closed to the open conformation.

Interacts with RAB13 (GTP-bound form); competes with RAB8A and is involved in tight junctions assembly. Interacts with RAB8A; competes with RAB13 and is involved in E-cadherin endocytic recycling. Interacts with RAB8B. Interacts (preferentially in opened conformation) with ACTN1 and ACTN4; stimulated by RAB13 activation. Interacts (via calponin-homology (CH) domain) with the filamins FLNA, FLNB and FLNC (via actin-binding domain). In terms of tissue distribution, detected in brain, lung, liver and kidney (at protein level).

It is found in the cell membrane. The protein localises to the cell junction. It localises to the tight junction. Its subcellular location is the recycling endosome. The protein resides in the cell projection. It is found in the neuron projection. The protein localises to the cytoplasm. It localises to the cytoskeleton. Effector of small Rab GTPases RAB8A and RAB13 which is involved in junctional complexes assembly through the regulation of cell adhesion molecules transport to the plasma membrane and actin cytoskeleton reorganization. Regulates the endocytic recycling of occludins, claudins and E-cadherin to the plasma membrane and may thereby regulate the establishment of tight junctions and adherens junctions. In parallel, may regulate actin cytoskeleton reorganization directly through interaction with F-actin or indirectly through actinins and filamins. Undergoes liquid-liquid phase separation to form tubular recycling endosomes. Plays 2 sequential roles in the biogenesis of tubular recycling endosomes: first organizes phase separation and then the closed form formed by interaction with RAB8A promotes endosomal tubulation. The polypeptide is MICAL-like protein 2 (Micall2) (Mus musculus (Mouse)).